The primary structure comprises 106 residues: ATP-dependent Clp protease adapter protein ClpS (106 aa).

Polar residues predominate over residues 1-13; sequence MGNNSTWSQSENL. The segment at 1 to 21 is disordered; the sequence is MGNNSTWSQSENLTADKQKEK.

The protein belongs to the ClpS family. As to quaternary structure, binds to the N-terminal domain of the chaperone ClpA.

In terms of biological role, involved in the modulation of the specificity of the ClpAP-mediated ATP-dependent protein degradation. This Pectobacterium carotovorum subsp. carotovorum (strain PC1) protein is ATP-dependent Clp protease adapter protein ClpS.